We begin with the raw amino-acid sequence, 770 residues long: Rho guanine nucleotide exchange factor 38 (770 aa).

A disordered region spans residues Lys-33 to Val-88. Phosphothreonine is present on Thr-34. Low complexity predominate over residues Val-37 to Ser-47. A compositionally biased stretch (basic and acidic residues) spans Ser-53 to Glu-66. Residues Lys-94–Leu-285 form the DH domain. Residues Leu-327–Asn-542 form the BAR domain. SH3 domains lie at Gly-581 to Pro-644 and Val-706 to Tyr-769.

In terms of biological role, may act as a guanine-nucleotide releasing factor. The chain is Rho guanine nucleotide exchange factor 38 (Arhgef38) from Mus musculus (Mouse).